Here is a 342-residue protein sequence, read N- to C-terminus: Anthranilate phosphoribosyltransferase (342 aa).

5-phospho-alpha-D-ribose 1-diphosphate contacts are provided by residues G90, 93–94, T98, 100–103, 118–126, and A130; these read GD, NIST, and KHGNRSVSS. Residue G90 coordinates anthranilate. S102 is a Mg(2+) binding site. Residue N121 participates in anthranilate binding. Anthranilate is bound at residue R176. Mg(2+) contacts are provided by D234 and E235.

Belongs to the anthranilate phosphoribosyltransferase family. In terms of assembly, homodimer. Mg(2+) serves as cofactor.

It carries out the reaction N-(5-phospho-beta-D-ribosyl)anthranilate + diphosphate = 5-phospho-alpha-D-ribose 1-diphosphate + anthranilate. The protein operates within amino-acid biosynthesis; L-tryptophan biosynthesis; L-tryptophan from chorismate: step 2/5. Catalyzes the transfer of the phosphoribosyl group of 5-phosphorylribose-1-pyrophosphate (PRPP) to anthranilate to yield N-(5'-phosphoribosyl)-anthranilate (PRA). This Mannheimia succiniciproducens (strain KCTC 0769BP / MBEL55E) protein is Anthranilate phosphoribosyltransferase.